The primary structure comprises 358 residues: Protein RecA (358 aa).

Position 67–74 (glycine 67–threonine 74) interacts with ATP.

The protein belongs to the RecA family.

The protein localises to the cytoplasm. In terms of biological role, can catalyze the hydrolysis of ATP in the presence of single-stranded DNA, the ATP-dependent uptake of single-stranded DNA by duplex DNA, and the ATP-dependent hybridization of homologous single-stranded DNAs. It interacts with LexA causing its activation and leading to its autocatalytic cleavage. This is Protein RecA from Xenorhabdus nematophila (strain ATCC 19061 / DSM 3370 / CCUG 14189 / LMG 1036 / NCIMB 9965 / AN6).